Consider the following 292-residue polypeptide: tRNA (guanine-N(1)-)-methyltransferase (292 aa).

S-adenosyl-L-methionine-binding positions include glycine 151 and 175–180 (IGDYVL).

It belongs to the RNA methyltransferase TrmD family. Homodimer.

It is found in the cytoplasm. It carries out the reaction guanosine(37) in tRNA + S-adenosyl-L-methionine = N(1)-methylguanosine(37) in tRNA + S-adenosyl-L-homocysteine + H(+). In terms of biological role, specifically methylates guanosine-37 in various tRNAs. The polypeptide is tRNA (guanine-N(1)-)-methyltransferase (Corynebacterium diphtheriae (strain ATCC 700971 / NCTC 13129 / Biotype gravis)).